The sequence spans 358 residues: Protein RecA 2 (358 aa).

69–76 (GPESSGKT) contributes to the ATP binding site. A disordered region spans residues 331-358 (GIGKSGAPSPRRRTSPRRPKVAARSAAV). Basic residues predominate over residues 340-351 (PRRRTSPRRPKV).

The protein belongs to the RecA family.

The protein resides in the cytoplasm. Can catalyze the hydrolysis of ATP in the presence of single-stranded DNA, the ATP-dependent uptake of single-stranded DNA by duplex DNA, and the ATP-dependent hybridization of homologous single-stranded DNAs. It interacts with LexA causing its activation and leading to its autocatalytic cleavage. The protein is Protein RecA 2 of Myxococcus xanthus.